We begin with the raw amino-acid sequence, 320 residues long: Cytochrome f (320 aa).

Positions 1 to 35 (MQTRNTLSWIREEITRSISVSLMIYIITWASISSA) are cleaved as a signal peptide. 4 residues coordinate heme: Tyr36, Cys56, Cys59, and His60. A helical membrane pass occupies residues 286–306 (VQGLLFFLGSVVLAQIFLVLK).

This sequence belongs to the cytochrome f family. In terms of assembly, the 4 large subunits of the cytochrome b6-f complex are cytochrome b6, subunit IV (17 kDa polypeptide, petD), cytochrome f and the Rieske protein, while the 4 small subunits are PetG, PetL, PetM and PetN. The complex functions as a dimer. Heme serves as cofactor.

It is found in the plastid. Its subcellular location is the chloroplast thylakoid membrane. In terms of biological role, component of the cytochrome b6-f complex, which mediates electron transfer between photosystem II (PSII) and photosystem I (PSI), cyclic electron flow around PSI, and state transitions. The chain is Cytochrome f from Olimarabidopsis pumila (Dwarf rocket).